The sequence spans 459 residues: Bifunctional protein GlmU (459 aa).

The interval Met-1–Arg-229 is pyrophosphorylase. UDP-N-acetyl-alpha-D-glucosamine is bound by residues Leu-8–Gly-11, Lys-22, Gln-72, and Gly-77–Thr-78. Asp-102 serves as a coordination point for Mg(2+). UDP-N-acetyl-alpha-D-glucosamine-binding residues include Gly-139, Glu-154, Asn-169, and Asn-227. Asn-227 contributes to the Mg(2+) binding site. The interval Val-230–Asn-250 is linker. The N-acetyltransferase stretch occupies residues Gly-251–Gln-459. UDP-N-acetyl-alpha-D-glucosamine is bound by residues Arg-332 and Lys-350. His-362 serves as the catalytic Proton acceptor. 2 residues coordinate UDP-N-acetyl-alpha-D-glucosamine: Tyr-365 and Asn-376. Residues Ala-379, Asn-385–Tyr-386, Ser-404, Ala-422, and Arg-439 each bind acetyl-CoA.

In the N-terminal section; belongs to the N-acetylglucosamine-1-phosphate uridyltransferase family. This sequence in the C-terminal section; belongs to the transferase hexapeptide repeat family. In terms of assembly, homotrimer. Mg(2+) is required as a cofactor.

It localises to the cytoplasm. The catalysed reaction is alpha-D-glucosamine 1-phosphate + acetyl-CoA = N-acetyl-alpha-D-glucosamine 1-phosphate + CoA + H(+). The enzyme catalyses N-acetyl-alpha-D-glucosamine 1-phosphate + UTP + H(+) = UDP-N-acetyl-alpha-D-glucosamine + diphosphate. Its pathway is nucleotide-sugar biosynthesis; UDP-N-acetyl-alpha-D-glucosamine biosynthesis; N-acetyl-alpha-D-glucosamine 1-phosphate from alpha-D-glucosamine 6-phosphate (route II): step 2/2. It functions in the pathway nucleotide-sugar biosynthesis; UDP-N-acetyl-alpha-D-glucosamine biosynthesis; UDP-N-acetyl-alpha-D-glucosamine from N-acetyl-alpha-D-glucosamine 1-phosphate: step 1/1. The protein operates within bacterial outer membrane biogenesis; LPS lipid A biosynthesis. Its function is as follows. Catalyzes the last two sequential reactions in the de novo biosynthetic pathway for UDP-N-acetylglucosamine (UDP-GlcNAc). The C-terminal domain catalyzes the transfer of acetyl group from acetyl coenzyme A to glucosamine-1-phosphate (GlcN-1-P) to produce N-acetylglucosamine-1-phosphate (GlcNAc-1-P), which is converted into UDP-GlcNAc by the transfer of uridine 5-monophosphate (from uridine 5-triphosphate), a reaction catalyzed by the N-terminal domain. This is Bifunctional protein GlmU from Streptococcus pneumoniae serotype 2 (strain D39 / NCTC 7466).